Here is a 151-residue protein sequence, read N- to C-terminus: FAD synthase (151 aa).

ATP contacts are provided by residues 12–13 (TF), 17–20 (HPGH), D97, and Y125.

Belongs to the archaeal FAD synthase family. In terms of assembly, homodimer. A divalent metal cation is required as a cofactor.

It carries out the reaction FMN + ATP + H(+) = FAD + diphosphate. It participates in cofactor biosynthesis; FAD biosynthesis; FAD from FMN: step 1/1. Its function is as follows. Catalyzes the transfer of the AMP portion of ATP to flavin mononucleotide (FMN) to produce flavin adenine dinucleotide (FAD) coenzyme. The sequence is that of FAD synthase from Methanococcus vannielii (strain ATCC 35089 / DSM 1224 / JCM 13029 / OCM 148 / SB).